We begin with the raw amino-acid sequence, 223 residues long: Triosephosphate isomerase (223 aa).

6–8 is a substrate binding site; sequence NLK. Histidine 86 serves as the catalytic Electrophile. Glutamate 151 acts as the Proton acceptor in catalysis. Residues glycine 157 and serine 187 each coordinate substrate.

The protein belongs to the triosephosphate isomerase family. Homodimer.

It localises to the cytoplasm. It catalyses the reaction D-glyceraldehyde 3-phosphate = dihydroxyacetone phosphate. Its pathway is carbohydrate biosynthesis; gluconeogenesis. It functions in the pathway carbohydrate degradation; glycolysis; D-glyceraldehyde 3-phosphate from glycerone phosphate: step 1/1. Its function is as follows. Involved in the gluconeogenesis. Catalyzes stereospecifically the conversion of dihydroxyacetone phosphate (DHAP) to D-glyceraldehyde-3-phosphate (G3P). This chain is Triosephosphate isomerase, found in Campylobacter jejuni subsp. jejuni serotype O:2 (strain ATCC 700819 / NCTC 11168).